The sequence spans 419 residues: Phosphoglycerate kinase (419 aa).

Substrate contacts are provided by residues 42 to 44 (DLN), arginine 58, 81 to 84 (HLGR), arginine 135, and arginine 168. ATP contacts are provided by residues lysine 219, glutamate 341, and 367 to 370 (GGDT).

Belongs to the phosphoglycerate kinase family. Monomer.

It is found in the cytoplasm. It carries out the reaction (2R)-3-phosphoglycerate + ATP = (2R)-3-phospho-glyceroyl phosphate + ADP. The protein operates within carbohydrate degradation; glycolysis; pyruvate from D-glyceraldehyde 3-phosphate: step 2/5. The protein is Phosphoglycerate kinase of Ralstonia nicotianae (strain ATCC BAA-1114 / GMI1000) (Ralstonia solanacearum).